Here is a 93-residue protein sequence, read N- to C-terminus: UPF0728 protein C10orf53 (93 aa).

Belongs to the UPF0728 family.

The chain is UPF0728 protein C10orf53 (C10orf53) from Homo sapiens (Human).